A 117-amino-acid polypeptide reads, in one-letter code: Large ribosomal subunit protein uL18 (117 aa).

It belongs to the universal ribosomal protein uL18 family. In terms of assembly, part of the 50S ribosomal subunit; part of the 5S rRNA/L5/L18/L25 subcomplex. Contacts the 5S and 23S rRNAs.

Its function is as follows. This is one of the proteins that bind and probably mediate the attachment of the 5S RNA into the large ribosomal subunit, where it forms part of the central protuberance. The polypeptide is Large ribosomal subunit protein uL18 (Francisella tularensis subsp. novicida (strain U112)).